We begin with the raw amino-acid sequence, 518 residues long: Motile sperm domain-containing protein 2 (518 aa).

Topologically, residues 1 to 496 (MAENHAQNKA…QVQRCIWFQQ (496 aa)) are cytoplasmic. One can recognise a CRAL-TRIO domain in the interval 82-239 (ESSIPRWLLE…HMGGTDPFKY (158 aa)). The tract at residues 252–308 (PLCENGPITSEDETSSKEDIESDGKETLETISNEEQTPLLKKINPTESTSKAEENEK) is disordered. Residues 265–279 (TSSKEDIESDGKETL) show a composition bias toward basic and acidic residues. In terms of domain architecture, MSP spans 327-445 (LLHISPAEEL…MEHRLRCHTV (119 aa)). Positions 365–366 (RT) are required for FFAT motif binding and phosphorylated FFAT motif binding. The helical; Anchor for type IV membrane protein transmembrane segment at 497–518 (LLLSLTMLLLAFVTSFFYLLYS) threads the bilayer.

As to quaternary structure, homooligomer. Interacts (via MSP domain) with STARD3NL (via FFAT motif), RMDN3 (via FFAT motif), OSBPL1A (via FFAT motif) and CERT1 (via FFAT motif). Interacts (via MSP domain) with STARD3 (via phosphorylated FFAT motif); this interaction depends on the critical phosphorylation of STARD3 on 'Ser-209'. Interacts with RB1CC1 (via phosphorylated FFAT motif), MIGA2 (via phosphorylated FFAT motif) and OSBPL1A (via FFAT motif). Highly expressed in CD14(+) monocytes, and at lower levels in neutrophils. Does not show significant expression in B-cells or T-cells.

Its subcellular location is the endoplasmic reticulum membrane. In terms of biological role, endoplasmic reticulum-anchored protein that mediates the formation of contact sites between the endoplasmic (ER) and endosomes, mitochondria or Golgi through interaction with conventional- and phosphorylated-FFAT-containing organelle-bound proteins. In addition, forms endoplasmic reticulum (ER)-lipid droplets (LDs) contacts through a direct protein-membrane interaction and participates in LDs homeostasis. The attachment mechanism involves an amphipathic helix that has an affinity for lipid packing defects present at the surface of LDs. Promotes migration of primary monocytes and neutrophils, in response to various chemokines. This is Motile sperm domain-containing protein 2 from Homo sapiens (Human).